The sequence spans 178 residues: Large ribosomal subunit protein uL6 (178 aa).

The protein belongs to the universal ribosomal protein uL6 family. As to quaternary structure, part of the 50S ribosomal subunit.

Its function is as follows. This protein binds to the 23S rRNA, and is important in its secondary structure. It is located near the subunit interface in the base of the L7/L12 stalk, and near the tRNA binding site of the peptidyltransferase center. The sequence is that of Large ribosomal subunit protein uL6 from Lactiplantibacillus plantarum (strain ATCC BAA-793 / NCIMB 8826 / WCFS1) (Lactobacillus plantarum).